Here is a 695-residue protein sequence, read N- to C-terminus: UvrABC system protein C (695 aa).

The segment covering 1–10 has biased composition (basic and acidic residues); that stretch reads MNHDPAETRD. The tract at residues 1–44 is disordered; sequence MNHDPAETRDTAAAPLADTESPSPVSPELTPHPAPAAQDIDTAT. The GIY-YIG domain maps to 88–166; sequence TSPGVYRMLN…IKQLRPRFNV (79 aa). A UVR domain is found at 276–311; it reads RAVKQELAVEMEKASNELEFETAALYRDRLAALSAI.

It belongs to the UvrC family. As to quaternary structure, interacts with UvrB in an incision complex.

It is found in the cytoplasm. Its function is as follows. The UvrABC repair system catalyzes the recognition and processing of DNA lesions. UvrC both incises the 5' and 3' sides of the lesion. The N-terminal half is responsible for the 3' incision and the C-terminal half is responsible for the 5' incision. The chain is UvrABC system protein C from Rhodopseudomonas palustris (strain HaA2).